The chain runs to 463 residues: Arginine biosynthesis bifunctional protein ArgJ, chloroplastic (463 aa).

Positions 207, 233, 244, 331, 458, and 463 each coordinate substrate. Residue Thr244 is the Nucleophile of the active site.

The protein belongs to the ArgJ family. Heterodimer of an alpha and a beta chain.

Its subcellular location is the plastid. It localises to the chloroplast. The catalysed reaction is N(2)-acetyl-L-ornithine + L-glutamate = N-acetyl-L-glutamate + L-ornithine. It catalyses the reaction L-glutamate + acetyl-CoA = N-acetyl-L-glutamate + CoA + H(+). The protein operates within amino-acid biosynthesis; L-arginine biosynthesis; L-ornithine and N-acetyl-L-glutamate from L-glutamate and N(2)-acetyl-L-ornithine (cyclic): step 1/1. It functions in the pathway amino-acid biosynthesis; L-arginine biosynthesis; N(2)-acetyl-L-ornithine from L-glutamate: step 1/4. Functionally, catalyzes two activities which are involved in the cyclic version of arginine biosynthesis: the synthesis of acetylglutamate from glutamate and acetyl-CoA, and of ornithine by transacetylation between acetylornithine and glutamate. The sequence is that of Arginine biosynthesis bifunctional protein ArgJ, chloroplastic from Oryza sativa subsp. japonica (Rice).